Reading from the N-terminus, the 716-residue chain is Polyribonucleotide nucleotidyltransferase (716 aa).

Positions 485 and 491 each coordinate Mg(2+). The 60-residue stretch at 552–611 folds into the KH domain; it reads PKITTISVPKEKIRDVIGSGGKVIREIVEYSGAKVDIGDDGTVTIAASNDEQAQKAIARI. The S1 motif domain occupies 621–689; the sequence is GRIYEGKVVK…DRGKVKLSMR (69 aa).

The protein belongs to the polyribonucleotide nucleotidyltransferase family. Mg(2+) is required as a cofactor.

The protein localises to the cytoplasm. The enzyme catalyses RNA(n+1) + phosphate = RNA(n) + a ribonucleoside 5'-diphosphate. Involved in mRNA degradation. Catalyzes the phosphorolysis of single-stranded polyribonucleotides processively in the 3'- to 5'-direction. The sequence is that of Polyribonucleotide nucleotidyltransferase from Gluconobacter oxydans (strain 621H) (Gluconobacter suboxydans).